The sequence spans 641 residues: Protein zwilch (641 aa).

Phosphoserine is present on Ser312.

This sequence belongs to the ZWILCH family. In terms of assembly, component of the RZZ complex composed of rod, Zw10 and Zwilch.

It is found in the cytoplasm. Its subcellular location is the chromosome. It localises to the centromere. The protein resides in the kinetochore. The protein localises to the cytoskeleton. It is found in the spindle. Its function is as follows. Essential component of the mitotic checkpoint, which prevents cells from prematurely exiting mitosis. Required for the assembly of the dynein-dynactin, Mad2 complexes and spindly/CG15415 onto kinetochores. Its function related to the spindle assembly machinery is proposed to depend on its association in the RZZ complex. Failure to assemble the complex due to the absence of any one of its components, results in the incorrect redistribution of the remaining components to diverse membrane compartments. The chain is Protein zwilch from Drosophila melanogaster (Fruit fly).